Here is a 153-residue protein sequence, read N- to C-terminus: Fucose mutarotase (153 aa).

His-24 functions as the Proton donor in the catalytic mechanism. Asp-32 lines the substrate pocket. Residue Asp-69 is part of the active site. Positions 79, 120, 138, and 140 each coordinate substrate. Tyr-120 is an active-site residue.

This sequence belongs to the RbsD / FucU family. Mainly homodimer, but also exists as homotetramer, homooctamer, and homodecamer. The homodimeric form seems catalytically inactive. Widely expressed in various tissues and cell lines, including kidney, liver, and pancreas, marginally in muscle and testis.

It catalyses the reaction alpha-L-fucose = beta-L-fucose. It participates in carbohydrate metabolism; L-fucose metabolism. Involved in the interconversion between alpha- and beta-L-fucoses. L-Fucose (6-deoxy-L-galactose) exists as alpha-L-fucose (29.5%) and beta-L-fucose (70.5%), the beta-form is metabolized through the salvage pathway. GDP-L-fucose formed either by the de novo or salvage pathways is transported into the endoplasmic reticulum, where it serves as a substrate for N- and O-glycosylations by fucosyltransferases. Fucosylated structures expressed on cell surfaces or secreted in biological fluids are believed to play a critical role in cell-cell adhesion and recognition processes. This is Fucose mutarotase (Fuom) from Mus musculus (Mouse).